The sequence spans 212 residues: Protein DEPP1 (212 aa).

Disordered stretches follow at residues 20 to 39, 49 to 79, and 113 to 176; these read EEML…SLDD, QPTS…GRPA, and QEKQ…SDLR. The span at 113-124 shows a compositional bias: basic and acidic residues; that stretch reads QEKQPSQRDLPR.

Expressed in various tissues, including pancreas, placenta, ovary, testis and kidney.

The protein localises to the cytoplasm. It is found in the peroxisome. It localises to the mitochondrion. Functionally, acts as a critical modulator of FOXO3-induced autophagy via increased cellular ROS. This chain is Protein DEPP1, found in Homo sapiens (Human).